A 153-amino-acid chain; its full sequence is Transcription antitermination protein NusB (153 aa).

The protein belongs to the NusB family.

Functionally, involved in transcription antitermination. Required for transcription of ribosomal RNA (rRNA) genes. Binds specifically to the boxA antiterminator sequence of the ribosomal RNA (rrn) operons. The protein is Transcription antitermination protein NusB of Nitratidesulfovibrio vulgaris (strain ATCC 29579 / DSM 644 / CCUG 34227 / NCIMB 8303 / VKM B-1760 / Hildenborough) (Desulfovibrio vulgaris).